Consider the following 435-residue polypeptide: Amino acid transporter AVT6C (435 aa).

Residues 1-24 form a disordered region; sequence MTPQIKTHLLPKQEPSSSENHGSS. A run of 11 helical transmembrane segments spans residues 28–48, 53–73, 100–120, 148–168, 181–201, 219–239, 260–280, 307–327, 354–374, 375–395, and 408–428; these read IVFN…PAAF, IVPA…SVGF, IAVQ…FSII, WNTR…PLVL, VSFL…ISAL, GSFW…TFHF, ISVI…YLLF, IVRL…NFSL, LALL…WYFF, QFMG…AIVL, and IVAA…ISTN.

This sequence belongs to the amino acid/polyamine transporter 2 family. Amino acid/auxin permease (AAAP) (TC 2.A.18.6) subfamily.

It localises to the membrane. In Arabidopsis thaliana (Mouse-ear cress), this protein is Amino acid transporter AVT6C.